The primary structure comprises 118 residues: Large ribosomal subunit protein uL18 (118 aa).

The disordered stretch occupies residues 1–24 (MISKPDKNKTRQRRHARVRGKISG). Basic residues predominate over residues 10-20 (TRQRRHARVRG).

This sequence belongs to the universal ribosomal protein uL18 family. Part of the 50S ribosomal subunit; part of the 5S rRNA/L5/L18/L25 subcomplex. Contacts the 5S and 23S rRNAs.

Its function is as follows. This is one of the proteins that bind and probably mediate the attachment of the 5S RNA into the large ribosomal subunit, where it forms part of the central protuberance. The sequence is that of Large ribosomal subunit protein uL18 from Lactiplantibacillus plantarum (strain ATCC BAA-793 / NCIMB 8826 / WCFS1) (Lactobacillus plantarum).